The following is a 239-amino-acid chain: MLKLLILKRIFLDYIFDGFKQALFLLFNADESVISAIKTTLLSSSISIVLALLIGFPLGFILGFFEFKLKRFIKLIVDTSLSFPTVAVGLILYALISSRGPLGEFGLLFTIKALILGQFILALPIVIALFSNLIENMNKKHFLLIKSFHLSPLKLVLTMIYELRFALISVVALAYGRIVAEVGVAMIVGGNIKYDTRTITTAISLETNKGEFASGIALALVLILIAFCLNFITHKLKRT.

The 197-residue stretch at 37 to 233 (IKTTLLSSSI…LIAFCLNFIT (197 aa)) folds into the ABC transmembrane type-1 domain. The next 5 membrane-spanning stretches (helical) occupy residues 45–65 (SISI…LGFF), 76–96 (IVDT…YALI), 114–134 (LILG…SNLI), 168–188 (ISVV…AMIV), and 212–232 (FASG…LNFI).

This sequence belongs to the binding-protein-dependent transport system permease family. The complex is composed of two ATP-binding proteins (TupC), two transmembrane proteins (TupB) and a solute-binding protein (TupA).

The protein localises to the cell inner membrane. Part of an ABC transporter complex involved in ultra-high affinity tungstate uptake. Probably responsible for the translocation of the substrate across the membrane. This Campylobacter jejuni subsp. jejuni serotype O:2 (strain ATCC 700819 / NCTC 11168) protein is Tungstate uptake system permease protein TupB.